The following is a 279-amino-acid chain: Eukaryotic translation initiation factor 3 subunit G (279 aa).

Disordered regions lie at residues 69-90 (AKYGKEKHSSPGPDTSTTQLGE) and 149-193 (LNGG…EARD). S77 carries the post-translational modification Phosphoserine. The RRM domain maps to 196-275 (TTLKVSQLNT…LILHLEWSKK (80 aa)).

It belongs to the eIF-3 subunit G family. Component of the eukaryotic translation initiation factor 3 (eIF-3) complex.

Its subcellular location is the cytoplasm. In terms of biological role, RNA-binding component of the eukaryotic translation initiation factor 3 (eIF-3) complex, which is involved in protein synthesis of a specialized repertoire of mRNAs and, together with other initiation factors, stimulates binding of mRNA and methionyl-tRNAi to the 40S ribosome. The eIF-3 complex specifically targets and initiates translation of a subset of mRNAs involved in cell proliferation. This subunit can bind 18S rRNA. This is Eukaryotic translation initiation factor 3 subunit G from Lodderomyces elongisporus (strain ATCC 11503 / CBS 2605 / JCM 1781 / NBRC 1676 / NRRL YB-4239) (Yeast).